Reading from the N-terminus, the 469-residue chain is Phenylalanine--tRNA ligase, mitochondrial (469 aa).

Residues 1-17 (MFLNRMMKTRTGLYRLY) constitute a mitochondrion transit peptide. Substrate-binding positions include 126–129 (SAHE), Arg155, 162–164 (THY), 169–171 (QME), Glu302, and Phe329. The 98-residue stretch at 372–469 (SKHPGSFRDV…LVKEYSVELR (98 aa)) folds into the FDX-ACB domain.

The protein belongs to the class-II aminoacyl-tRNA synthetase family. In terms of assembly, monomer.

Its subcellular location is the mitochondrion matrix. It catalyses the reaction tRNA(Phe) + L-phenylalanine + ATP = L-phenylalanyl-tRNA(Phe) + AMP + diphosphate + H(+). Its function is as follows. Is responsible for the charging of tRNA(Phe) with phenylalanine in mitochondrial translation. This Saccharomyces cerevisiae (strain ATCC 204508 / S288c) (Baker's yeast) protein is Phenylalanine--tRNA ligase, mitochondrial (MSF1).